The following is a 196-amino-acid chain: Ribosome maturation factor RimP (196 aa).

The tract at residues 164-196 (LAPQKPNKPGPKKPGHEKKKPSNESAAGKPRAE) is disordered. A compositionally biased stretch (basic residues) spans 173-182 (GPKKPGHEKK).

It belongs to the RimP family.

Its subcellular location is the cytoplasm. Its function is as follows. Required for maturation of 30S ribosomal subunits. The sequence is that of Ribosome maturation factor RimP from Xanthomonas axonopodis pv. citri (strain 306).